The sequence spans 554 residues: Potassium-transporting ATPase potassium-binding subunit (554 aa).

12 helical membrane passes run 3–23 (PVLA…LAHV), 60–80 (PAYL…LYLL), 131–151 (GLAV…VALV), 174–194 (VRVL…CGVI), 252–272 (LFEI…FGIM), 279–299 (GYAI…LMMW), 323–343 (FGIG…TGAV), 352–372 (GLGG…PGGV), 375–395 (GLYG…LMVG), 412–432 (FAAC…AAAM), 481–501 (LGLA…ALAG), and 522–542 (LFAG…YFPA).

Belongs to the KdpA family. As to quaternary structure, the system is composed of three essential subunits: KdpA, KdpB and KdpC.

It localises to the cell membrane. Functionally, part of the high-affinity ATP-driven potassium transport (or Kdp) system, which catalyzes the hydrolysis of ATP coupled with the electrogenic transport of potassium into the cytoplasm. This subunit binds the extracellular potassium ions and delivers the ions to the membrane domain of KdpB through an intramembrane tunnel. The protein is Potassium-transporting ATPase potassium-binding subunit of Streptomyces coelicolor (strain ATCC BAA-471 / A3(2) / M145).